A 351-amino-acid polypeptide reads, in one-letter code: Glycerol-1-phosphate dehydrogenase [NAD(P)+] (351 aa).

Residues 93 to 97 (GKVLD) and 115 to 118 (TTAS) each bind NAD(+). Asp120 contacts substrate. Ser124 contributes to the NAD(+) binding site. Asp167 serves as a coordination point for substrate. Zn(2+)-binding residues include Asp167 and His247. His251 contributes to the substrate binding site. His263 serves as a coordination point for Zn(2+).

It belongs to the glycerol-1-phosphate dehydrogenase family. Zn(2+) serves as cofactor.

Its subcellular location is the cytoplasm. The catalysed reaction is sn-glycerol 1-phosphate + NAD(+) = dihydroxyacetone phosphate + NADH + H(+). It carries out the reaction sn-glycerol 1-phosphate + NADP(+) = dihydroxyacetone phosphate + NADPH + H(+). The protein operates within membrane lipid metabolism; glycerophospholipid metabolism. Catalyzes the NAD(P)H-dependent reduction of dihydroxyacetonephosphate (DHAP or glycerone phosphate) to glycerol 1-phosphate (G1P). The G1P thus generated is used as the glycerophosphate backbone of phospholipids in the cellular membranes of Archaea. The protein is Glycerol-1-phosphate dehydrogenase [NAD(P)+] of Archaeoglobus fulgidus (strain ATCC 49558 / DSM 4304 / JCM 9628 / NBRC 100126 / VC-16).